The sequence spans 442 residues: PCI domain-containing protein C1105.07c (442 aa).

The 192-residue stretch at 224-415 (VTFRYYLGRC…STLVLKKDPS (192 aa)) folds into the PCI domain.

It is found in the cytoplasm. Its subcellular location is the nucleus envelope. The protein is PCI domain-containing protein C1105.07c of Schizosaccharomyces pombe (strain 972 / ATCC 24843) (Fission yeast).